Consider the following 94-residue polypeptide: Cytochrome b-c1 complex subunit 8, mitochondrial (94 aa).

Residues Gly2–Phe49 lie on the Mitochondrial matrix side of the membrane. A helical transmembrane segment spans residues Arg50–Leu80. Residues Tyr81–Val94 lie on the Mitochondrial intermembrane side of the membrane.

It belongs to the UQCRQ/QCR8 family. As to quaternary structure, component of the ubiquinol-cytochrome c oxidoreductase (cytochrome b-c1 complex, complex III, CIII), a multisubunit enzyme composed of 10 subunits. The complex is composed of 3 respiratory subunits cytochrome b (COB), cytochrome c1 (CYT1) and Rieske protein (RIP1), 2 core protein subunits COR1 and QCR2, and 5 low-molecular weight protein subunits QCR6, QCR7, QCR8, QCR9 and QCR10. The complex exists as an obligatory dimer and forms supercomplexes (SCs) in the inner mitochondrial membrane with a monomer or a dimer of cytochrome c oxidase (complex IV, CIV), resulting in 2 different assemblies (supercomplexes III(2)IV and III(2)IV(2)).

It localises to the mitochondrion inner membrane. Its function is as follows. Component of the ubiquinol-cytochrome c oxidoreductase, a multisubunit transmembrane complex that is part of the mitochondrial electron transport chain which drives oxidative phosphorylation. The respiratory chain contains 3 multisubunit complexes succinate dehydrogenase (complex II, CII), ubiquinol-cytochrome c oxidoreductase (cytochrome b-c1 complex, complex III, CIII) and cytochrome c oxidase (complex IV, CIV), that cooperate to transfer electrons derived from NADH and succinate to molecular oxygen, creating an electrochemical gradient over the inner membrane that drives transmembrane transport and the ATP synthase. The cytochrome b-c1 complex catalyzes electron transfer from ubiquinol to cytochrome c, linking this redox reaction to translocation of protons across the mitochondrial inner membrane, with protons being carried across the membrane as hydrogens on the quinol. In the process called Q cycle, 2 protons are consumed from the matrix, 4 protons are released into the intermembrane space and 2 electrons are passed to cytochrome c. This chain is Cytochrome b-c1 complex subunit 8, mitochondrial (QCR8), found in Saccharomyces cerevisiae (strain ATCC 204508 / S288c) (Baker's yeast).